The following is a 247-amino-acid chain: Chaperone protein AfaB (247 aa).

The first 29 residues, 1–29 (MKMRAVAVFTGMLTGVLSVAGLLSAGAYA), serve as a signal peptide directing secretion.

It belongs to the periplasmic pilus chaperone family.

It localises to the periplasm. Functionally, involved in the biogenesis of the AFA-III afimbrial adhesin. The chain is Chaperone protein AfaB (afaB) from Escherichia coli.